A 696-amino-acid chain; its full sequence is Divalent metal transporter 1 (696 aa).

Residues 1 to 31 (MHQDNSMRRAINQSRNGGSDSCDINNDREHD) form a disordered region. Residues 1-236 (MHQDNSMRRA…RSNRLSFMSK (236 aa)) lie on the Cytoplasmic side of the membrane. Positions 11–24 (INQSRNGGSDSCDI) are enriched in polar residues. A helical transmembrane segment spans residues 237 to 255 (LKMYFNYFGPGWIVAIAYL). The Vacuolar portion of the chain corresponds to 256–288 (DPGNICGNLNVGLIRSDDFINVNSSVKDYTGYR). Asn-278 carries N-linked (GlcNAc...) asparagine glycosylation. A helical membrane pass occupies residues 289–311 (LLWVLVYGHILGFIFHTLSMKLG). The Cytoplasmic portion of the chain corresponds to 312–331 (HITGLDLAALCRKEFSSKFS). Residues 332-357 (YFLYICVQIAIWGAHLQAIIGVFVAI) traverse the membrane as a helical segment. Over 358–362 (NLILG) the chain is Vacuolar. The chain crosses the membrane as a helical span at residues 363–382 (IPVKIAILYTLIEAFAYSFL). Over 383 to 393 (ENKSLDLLEKV) the chain is Cytoplasmic. A helical membrane pass occupies residues 394 to 416 (LSLLIGILVCCFMFNVFMTPINF). At 417 to 435 (QEVASSILYPRIPKGKLLD) the chain is on the vacuolar side. The helical transmembrane segment at 436–455 (TMGLLGSVISAHIFYLHSNL) threads the bilayer. Residues 456–475 (TSKKKPVIYNDRMVKRYNKL) are Cytoplasmic-facing. Residues 476–499 (GTIESGGSLLVSCITNCIIVLTFA) form a helical membrane-spanning segment. At 500-529 (EVNISGDDRKADYNLFNAYDVMKKYFGKTS) the chain is on the vacuolar side. The N-linked (GlcNAc...) asparagine glycan is linked to Asn-502. Residues 530-546 (MYIWSFGLLSSGNNASF) form a helical membrane-spanning segment. Residues 547 to 566 (MCEYASKSVFEGFLNKNVNP) are Cytoplasmic-facing. A helical transmembrane segment spans residues 567–585 (FFRVIFSRIILFIMLYAYV). Topologically, residues 586–596 (SYDKYTIDQLS) are vacuolar. A helical transmembrane segment spans residues 597–615 (NFINVVQILLLPLAIIPLY). Topologically, residues 616 to 634 (RFSIHKNVLGKFAIKGAFK) are cytoplasmic. Residues 635–657 (YLVFVLVISIIVANFLLTLFDFL) traverse the membrane as a helical segment. Topologically, residues 658-662 (QYAPS) are vacuolar. The chain crosses the membrane as a helical span at residues 663 to 684 (NLYVIFIFISSIFYLLFIIYFF). Residues 685 to 696 (NMPITKTYYKDS) lie on the Cytoplasmic side of the membrane.

The protein belongs to the NRAMP (TC 2.A.55) family.

The protein resides in the vacuole membrane. It catalyses the reaction Fe(2+)(in) = Fe(2+)(out). In terms of biological role, iron transporter. Required for parasite development during the blood stages. Required for full pathogenicity. The protein is Divalent metal transporter 1 of Plasmodium yoelii.